Here is a 176-residue protein sequence, read N- to C-terminus: MAVRRIVKYGEDILRQKLKPVDFKTLEPQLDAILQDMHDTCMSFQGAGLSANQIGLTHRIAMIFIPEKTPKGEAQKFKRYVVINPVIVSKKGCVTDEEGCLSLPGLWVEIERAESIVVHCLNEKGLPVEIHAKGFLAKALQHEIDHLDGKIFIDHADPKLKPEIKKELKKLSKNWS.

The Fe cation site is built by cysteine 100 and histidine 142. Glutamate 143 is an active-site residue. Residue histidine 146 coordinates Fe cation.

The protein belongs to the polypeptide deformylase family. The cofactor is Fe(2+).

The enzyme catalyses N-terminal N-formyl-L-methionyl-[peptide] + H2O = N-terminal L-methionyl-[peptide] + formate. Functionally, removes the formyl group from the N-terminal Met of newly synthesized proteins. Requires at least a dipeptide for an efficient rate of reaction. N-terminal L-methionine is a prerequisite for activity but the enzyme has broad specificity at other positions. The sequence is that of Peptide deformylase from Elusimicrobium minutum (strain Pei191).